A 210-amino-acid polypeptide reads, in one-letter code: Thymidylate kinase (210 aa).

10-17 contacts ATP; the sequence is GLEGAGKT.

This sequence belongs to the thymidylate kinase family.

It carries out the reaction dTMP + ATP = dTDP + ADP. In terms of biological role, phosphorylation of dTMP to form dTDP in both de novo and salvage pathways of dTTP synthesis. The sequence is that of Thymidylate kinase from Erwinia tasmaniensis (strain DSM 17950 / CFBP 7177 / CIP 109463 / NCPPB 4357 / Et1/99).